Here is a 315-residue protein sequence, read N- to C-terminus: 4-hydroxy-3-methylbut-2-enyl diphosphate reductase (315 aa).

Residue Cys-12 participates in [4Fe-4S] cluster binding. (2E)-4-hydroxy-3-methylbut-2-enyl diphosphate is bound by residues His-41 and His-74. 2 residues coordinate dimethylallyl diphosphate: His-41 and His-74. Residues His-41 and His-74 each coordinate isopentenyl diphosphate. Residue Cys-96 coordinates [4Fe-4S] cluster. His-124 serves as a coordination point for (2E)-4-hydroxy-3-methylbut-2-enyl diphosphate. His-124 is a dimethylallyl diphosphate binding site. His-124 serves as a coordination point for isopentenyl diphosphate. Residue Glu-126 is the Proton donor of the active site. Thr-168 contributes to the (2E)-4-hydroxy-3-methylbut-2-enyl diphosphate binding site. A [4Fe-4S] cluster-binding site is contributed by Cys-198. The (2E)-4-hydroxy-3-methylbut-2-enyl diphosphate site is built by Ser-226, Ser-227, Asn-228, and Ser-270. Dimethylallyl diphosphate-binding residues include Ser-226, Ser-227, Asn-228, and Ser-270. Isopentenyl diphosphate-binding residues include Ser-226, Ser-227, Asn-228, and Ser-270.

The protein belongs to the IspH family. Requires [4Fe-4S] cluster as cofactor.

It carries out the reaction isopentenyl diphosphate + 2 oxidized [2Fe-2S]-[ferredoxin] + H2O = (2E)-4-hydroxy-3-methylbut-2-enyl diphosphate + 2 reduced [2Fe-2S]-[ferredoxin] + 2 H(+). It catalyses the reaction dimethylallyl diphosphate + 2 oxidized [2Fe-2S]-[ferredoxin] + H2O = (2E)-4-hydroxy-3-methylbut-2-enyl diphosphate + 2 reduced [2Fe-2S]-[ferredoxin] + 2 H(+). Its pathway is isoprenoid biosynthesis; dimethylallyl diphosphate biosynthesis; dimethylallyl diphosphate from (2E)-4-hydroxy-3-methylbutenyl diphosphate: step 1/1. The protein operates within isoprenoid biosynthesis; isopentenyl diphosphate biosynthesis via DXP pathway; isopentenyl diphosphate from 1-deoxy-D-xylulose 5-phosphate: step 6/6. Catalyzes the conversion of 1-hydroxy-2-methyl-2-(E)-butenyl 4-diphosphate (HMBPP) into a mixture of isopentenyl diphosphate (IPP) and dimethylallyl diphosphate (DMAPP). Acts in the terminal step of the DOXP/MEP pathway for isoprenoid precursor biosynthesis. The sequence is that of 4-hydroxy-3-methylbut-2-enyl diphosphate reductase from Pseudomonas fluorescens (strain ATCC BAA-477 / NRRL B-23932 / Pf-5).